The primary structure comprises 352 residues: MANIDKDKLKAIEMAMGQIEKQFGKGSVMKLGEQGAPQMDAVSTGCLDLDIALGIGGVPKGRIIEIYGPESSGKTTVALHVVAEAQKLGGAAAYIDAEHALDPVYAKRLGVNIDDLVVSQPDTGEQALEITEALVRSGAIDVLVVDSVAALVPRAEIEGEMGDSHVGLQARLMSQALRKLTGTINKSNCVVIFINQLREKVGIMFGNPETTPGGRALKFYASVRMDIRRIDSIKQGDGITGNRTRVKIVKNKVAPPFKQAEFDIMYNEGISKEGNIVDVGVKENIVQKSGAWFSYGDIRLGQGRENAKQYLKENPAVALDIENQIREKYSLPLAKAVESTSVEENTEESVES.

68 to 75 (GPESSGKT) is a binding site for ATP.

This sequence belongs to the RecA family.

The protein localises to the cytoplasm. Its function is as follows. Can catalyze the hydrolysis of ATP in the presence of single-stranded DNA, the ATP-dependent uptake of single-stranded DNA by duplex DNA, and the ATP-dependent hybridization of homologous single-stranded DNAs. It interacts with LexA causing its activation and leading to its autocatalytic cleavage. The sequence is that of Protein RecA from Clostridium perfringens (strain ATCC 13124 / DSM 756 / JCM 1290 / NCIMB 6125 / NCTC 8237 / Type A).